A 270-amino-acid polypeptide reads, in one-letter code: Glutamate racemase (270 aa).

Residues 14–15 (DS) and 46–47 (YG) contribute to the substrate site. Cys77 acts as the Proton donor/acceptor in catalysis. 78–79 (NT) provides a ligand contact to substrate. Residue Cys189 is the Proton donor/acceptor of the active site. Substrate is bound at residue 190-191 (TH).

Belongs to the aspartate/glutamate racemases family.

It carries out the reaction L-glutamate = D-glutamate. Its pathway is cell wall biogenesis; peptidoglycan biosynthesis. In terms of biological role, provides the (R)-glutamate required for cell wall biosynthesis. The sequence is that of Glutamate racemase from Neisseria meningitidis serogroup A / serotype 4A (strain DSM 15465 / Z2491).